The sequence spans 1157 residues: ATP-dependent helicase/deoxyribonuclease subunit B (1157 aa).

Residues 1–278 (MTLQIIAGRS…FFLENKRAKT (278 aa)) form the UvrD-like helicase ATP-binding domain. 8 to 15 (GRSGTGKT) serves as a coordination point for ATP. The UvrD-like helicase C-terminal domain occupies 272–590 (ENKRAKTESL…VLSDMENAKL (319 aa)). Residues cysteine 794, cysteine 1115, cysteine 1118, and cysteine 1124 each coordinate [4Fe-4S] cluster.

Belongs to the helicase family. AddB/RexB type 1 subfamily. In terms of assembly, heterodimer of AddA and AddB. Mg(2+) is required as a cofactor. Requires [4Fe-4S] cluster as cofactor.

In terms of biological role, the heterodimer acts as both an ATP-dependent DNA helicase and an ATP-dependent, dual-direction single-stranded exonuclease. Recognizes the chi site generating a DNA molecule suitable for the initiation of homologous recombination. The AddB subunit has 5' -&gt; 3' nuclease activity but not helicase activity. The polypeptide is ATP-dependent helicase/deoxyribonuclease subunit B (Listeria monocytogenes serotype 4a (strain HCC23)).